A 214-amino-acid chain; its full sequence is tRNA (guanine-N(7)-)-methyltransferase (214 aa).

Residues Glu45, Glu70, Asp97, and Asp119 each coordinate S-adenosyl-L-methionine. Asp119 is a catalytic residue. Substrate contacts are provided by residues Lys123, Asp155, and 192–195 (TEYE).

It belongs to the class I-like SAM-binding methyltransferase superfamily. TrmB family.

The enzyme catalyses guanosine(46) in tRNA + S-adenosyl-L-methionine = N(7)-methylguanosine(46) in tRNA + S-adenosyl-L-homocysteine. The protein operates within tRNA modification; N(7)-methylguanine-tRNA biosynthesis. In terms of biological role, catalyzes the formation of N(7)-methylguanine at position 46 (m7G46) in tRNA. The chain is tRNA (guanine-N(7)-)-methyltransferase from Clostridioides difficile (strain 630) (Peptoclostridium difficile).